The sequence spans 606 residues: Kelch-like protein 26 (606 aa).

Residues 1 to 19 are compositionally biased toward low complexity; that stretch reads MAESGGSSGSSQSPERPSS. The tract at residues 1–20 is disordered; that stretch reads MAESGGSSGSSQSPERPSSL. Ala2 bears the N-acetylalanine mark. The BTB domain occupies 54-121; it reads LDVVLTVNSE…AYSAEVTLDL (68 aa). The 102-residue stretch at 156 to 257 folds into the BACK domain; it reads CLHIGQMATT…QPAELVDSVQ (102 aa). Kelch repeat units follow at residues 301–352, 353–404, 406–451, 452–499, 501–550, and 552–599; these read SLVA…VLDN, FVYV…ALGG, LYAT…AAAG, RLYI…GAAG, IYAL…LLER, and IYIV…AVLL. Phosphoserine is present on Ser430.

Its function is as follows. May play a role in endo(sarco)plasmic reticulum (ER/SR) mitochondrial signaling. May be part of the ubiquitin-proteasome system (UPS) and affect ubiquitination and degradation of target substrates in cardiomyocytes. This Mus musculus (Mouse) protein is Kelch-like protein 26 (Klhl26).